The sequence spans 567 residues: MFS-type transporter poxA (567 aa).

Positions methionine 1–lysine 23 are enriched in basic and acidic residues. Residues methionine 1–glutamate 24 are disordered. Helical transmembrane passes span alanine 35–glycine 55, alanine 77–alanine 97, leucine 108–valine 128, glycine 141–leucine 161, serine 165–isoleucine 185, tryptophan 197–phenylalanine 217, leucine 240–glycine 260, serine 271–tryptophan 291, isoleucine 311–phenylalanine 331, and valine 349–valine 369. An N-linked (GlcNAc...) asparagine glycan is attached at asparagine 370. 4 helical membrane-spanning segments follow: residues threonine 372 to leucine 392, isoleucine 410 to leucine 430, leucine 436 to leucine 456, and alanine 515 to phenylalanine 535. Residues glutamate 547–alanine 567 are disordered.

The protein belongs to the major facilitator superfamily. TCR/Tet family.

The protein resides in the cell membrane. Functionally, MFS-type transporter; part of the gene cluster that mediates the biosynthesis of oxaleimides, cytotoxic compounds containing an unusual disubstituted succinimide moiety. The chain is MFS-type transporter poxA from Penicillium oxalicum (strain 114-2 / CGMCC 5302) (Penicillium decumbens).